A 471-amino-acid chain; its full sequence is Putative multidrug resistance protein MdtD (471 aa).

Topologically, residues Met1–Leu12 are periplasmic. Residues Trp13–Ile33 form a helical membrane-spanning segment. Topologically, residues Pro34 to His48 are cytoplasmic. A helical transmembrane segment spans residues Met49–Ala69. Residues Asp70 to Asn76 lie on the Periplasmic side of the membrane. Residues Ile77–Thr97 traverse the membrane as a helical segment. Over Leu98–Leu101 the chain is Cytoplasmic. The helical transmembrane segment at Leu102 to Met124 threads the bilayer. Residues Lys125–Thr137 are Periplasmic-facing. Residues Phe138–Val158 form a helical membrane-spanning segment. Residues Glu159–His164 lie on the Cytoplasmic side of the membrane. Residues Trp165–Met185 traverse the membrane as a helical segment. At Pro186 to Asp196 the chain is on the periplasmic side. Residues Leu197–Ser217 form a helical membrane-spanning segment. Topologically, residues Lys218–Pro224 are cytoplasmic. Residues Leu225 to Ala245 form a helical membrane-spanning segment. Topologically, residues Arg246–Thr262 are periplasmic. The chain crosses the membrane as a helical span at residues Phe263 to Met283. Over Thr284 to Pro285 the chain is Cytoplasmic. Residues Val286–Met306 form a helical membrane-spanning segment. Residues Val307–Thr341 are Periplasmic-facing. A helical membrane pass occupies residues Leu342–Leu362. Residues Gln363–Ser395 lie on the Cytoplasmic side of the membrane. A helical transmembrane segment spans residues Met396–Phe416. At Gly417–Thr430 the chain is on the periplasmic side. Residues Val431 to Ala451 form a helical membrane-spanning segment. Over Arg452 to Gln471 the chain is Cytoplasmic.

This sequence belongs to the major facilitator superfamily. TCR/Tet family.

It is found in the cell inner membrane. The polypeptide is Putative multidrug resistance protein MdtD (Shigella flexneri serotype 5b (strain 8401)).